Reading from the N-terminus, the 149-residue chain is D-aminoacyl-tRNA deacylase (149 aa).

Positions 137 to 138 (GP) match the Gly-cisPro motif, important for rejection of L-amino acids motif.

It belongs to the DTD family. In terms of assembly, homodimer.

The protein localises to the cytoplasm. The enzyme catalyses glycyl-tRNA(Ala) + H2O = tRNA(Ala) + glycine + H(+). The catalysed reaction is a D-aminoacyl-tRNA + H2O = a tRNA + a D-alpha-amino acid + H(+). An aminoacyl-tRNA editing enzyme that deacylates mischarged D-aminoacyl-tRNAs. Also deacylates mischarged glycyl-tRNA(Ala), protecting cells against glycine mischarging by AlaRS. Acts via tRNA-based rather than protein-based catalysis; rejects L-amino acids rather than detecting D-amino acids in the active site. By recycling D-aminoacyl-tRNA to D-amino acids and free tRNA molecules, this enzyme counteracts the toxicity associated with the formation of D-aminoacyl-tRNA entities in vivo and helps enforce protein L-homochirality. This chain is D-aminoacyl-tRNA deacylase, found in Clostridium novyi (strain NT).